Reading from the N-terminus, the 96-residue chain is Large ribosomal subunit protein bL27 (96 aa).

The segment at 13-33 (KGGGSTANGRNSAGRRLGAKA) is disordered.

Belongs to the bacterial ribosomal protein bL27 family.

The sequence is that of Large ribosomal subunit protein bL27 from Lactobacillus acidophilus (strain ATCC 700396 / NCK56 / N2 / NCFM).